A 407-amino-acid polypeptide reads, in one-letter code: Putative colanic acid biosynthesis glycosyl transferase WcaI (407 aa).

Its pathway is slime biogenesis; slime polysaccharide biosynthesis. The chain is Putative colanic acid biosynthesis glycosyl transferase WcaI (wcaI) from Escherichia coli (strain K12).